The chain runs to 383 residues: Dual-specificity RNA methyltransferase RlmN (383 aa).

Glutamate 93 (proton acceptor) is an active-site residue. The Radical SAM core domain maps to 99 to 339; sequence EETRGTLCVS…TTIRKTRGDD (241 aa). Cysteine 106 and cysteine 344 are disulfide-bonded. Positions 113, 117, and 120 each coordinate [4Fe-4S] cluster. Residues 170–171, serine 202, 224–226, and asparagine 301 contribute to the S-adenosyl-L-methionine site; these read GE and SLH. Cysteine 344 functions as the S-methylcysteine intermediate in the catalytic mechanism.

This sequence belongs to the radical SAM superfamily. RlmN family. The cofactor is [4Fe-4S] cluster.

The protein localises to the cytoplasm. It catalyses the reaction adenosine(2503) in 23S rRNA + 2 reduced [2Fe-2S]-[ferredoxin] + 2 S-adenosyl-L-methionine = 2-methyladenosine(2503) in 23S rRNA + 5'-deoxyadenosine + L-methionine + 2 oxidized [2Fe-2S]-[ferredoxin] + S-adenosyl-L-homocysteine. The enzyme catalyses adenosine(37) in tRNA + 2 reduced [2Fe-2S]-[ferredoxin] + 2 S-adenosyl-L-methionine = 2-methyladenosine(37) in tRNA + 5'-deoxyadenosine + L-methionine + 2 oxidized [2Fe-2S]-[ferredoxin] + S-adenosyl-L-homocysteine. Its function is as follows. Specifically methylates position 2 of adenine 2503 in 23S rRNA and position 2 of adenine 37 in tRNAs. m2A2503 modification seems to play a crucial role in the proofreading step occurring at the peptidyl transferase center and thus would serve to optimize ribosomal fidelity. The protein is Dual-specificity RNA methyltransferase RlmN of Ralstonia nicotianae (strain ATCC BAA-1114 / GMI1000) (Ralstonia solanacearum).